Reading from the N-terminus, the 303-residue chain is GTPase Era (303 aa).

The Era-type G domain occupies 7–176; it reads KSGFVAIIGR…LDNVVSHLDE (170 aa). Residues 15-22 are G1; it reads GRPNVGKS. 15 to 22 is a GTP binding site; it reads GRPNVGKS. The segment at 41-45 is G2; sequence QTTRN. The interval 62–65 is G3; the sequence is DTPG. Residues 62-66 and 125-128 each bind GTP; these read DTPGV and NKVD. A G4 region spans residues 125–128; the sequence is NKVD. The segment at 155-157 is G5; it reads ISA. In terms of domain architecture, KH type-2 spans 207-284; it reads TRQEVPHSVA…FLETWVKVEP (78 aa).

It belongs to the TRAFAC class TrmE-Era-EngA-EngB-Septin-like GTPase superfamily. Era GTPase family. As to quaternary structure, monomer.

The protein localises to the cytoplasm. Its subcellular location is the cell membrane. Its function is as follows. An essential GTPase that binds both GDP and GTP, with rapid nucleotide exchange. Plays a role in 16S rRNA processing and 30S ribosomal subunit biogenesis and possibly also in cell cycle regulation and energy metabolism. The chain is GTPase Era from Leuconostoc citreum (strain KM20).